Here is a 345-residue protein sequence, read N- to C-terminus: Tyrosine--tRNA ligase (345 aa).

Tyr36 is a binding site for L-tyrosine. The short motif at 41 to 49 (PTGEMHIGH) is the 'HIGH' region element. Residues Tyr163, Gln167, Asp170, and Gln185 each contribute to the L-tyrosine site.

Belongs to the class-I aminoacyl-tRNA synthetase family. TyrS type 3 subfamily. Homodimer.

Its subcellular location is the cytoplasm. It catalyses the reaction tRNA(Tyr) + L-tyrosine + ATP = L-tyrosyl-tRNA(Tyr) + AMP + diphosphate + H(+). Functionally, catalyzes the attachment of tyrosine to tRNA(Tyr) in a two-step reaction: tyrosine is first activated by ATP to form Tyr-AMP and then transferred to the acceptor end of tRNA(Tyr). This chain is Tyrosine--tRNA ligase, found in Natronomonas pharaonis (strain ATCC 35678 / DSM 2160 / CIP 103997 / JCM 8858 / NBRC 14720 / NCIMB 2260 / Gabara) (Halobacterium pharaonis).